The primary structure comprises 191 residues: MADVPRLQKQYQDEVRPSLTDQFGYENPMEVPRLEKICVNRGVGEVSENQKALDQAVEEMRKITGQHPTIRRAKRSIASFDVREGMPVGVKVTLREARMYEFFDRLVTLALPNIRDFRGVPDRSFDGRGNYTLGIDEQIIFPEIDVDNVDRIDGMDITFVTDAETDEESYALLKGLGMPFVRRGDEEPAEA.

It belongs to the universal ribosomal protein uL5 family. Part of the 50S ribosomal subunit; part of the 5S rRNA/L5/L18/L25 subcomplex. Contacts the 5S rRNA and the P site tRNA. Forms a bridge to the 30S subunit in the 70S ribosome.

Functionally, this is one of the proteins that bind and probably mediate the attachment of the 5S RNA into the large ribosomal subunit, where it forms part of the central protuberance. In the 70S ribosome it contacts protein S13 of the 30S subunit (bridge B1b), connecting the 2 subunits; this bridge is implicated in subunit movement. Contacts the P site tRNA; the 5S rRNA and some of its associated proteins might help stabilize positioning of ribosome-bound tRNAs. This Salinibacter ruber (strain DSM 13855 / M31) protein is Large ribosomal subunit protein uL5.